We begin with the raw amino-acid sequence, 342 residues long: Methionine import ATP-binding protein MetN 3 (342 aa).

One can recognise an ABC transporter domain in the interval 2-241 (ISLKGISKTF…PKEQMTKEFV (240 aa)). 38-45 (GYSGAGKS) is an ATP binding site.

The protein belongs to the ABC transporter superfamily. Methionine importer (TC 3.A.1.24) family. As to quaternary structure, the complex is composed of two ATP-binding proteins (MetN), two transmembrane proteins (MetI) and a solute-binding protein (MetQ).

The protein localises to the cell membrane. The catalysed reaction is L-methionine(out) + ATP + H2O = L-methionine(in) + ADP + phosphate + H(+). The enzyme catalyses D-methionine(out) + ATP + H2O = D-methionine(in) + ADP + phosphate + H(+). Part of the ABC transporter complex MetNIQ involved in methionine import. Responsible for energy coupling to the transport system. The sequence is that of Methionine import ATP-binding protein MetN 3 from Shouchella clausii (strain KSM-K16) (Alkalihalobacillus clausii).